Reading from the N-terminus, the 927-residue chain is Echinoderm microtubule-associated protein-like 4 (927 aa).

The microtubule-binding stretch occupies residues 1 to 189 (MDGFAGSLDD…IPSDVENYDD (189 aa)). The stretch at 14–63 (AASTSDVQDRLSALELRVQQQEDEITVLKAALADVLRRLAISEDQVATVR) forms a coiled coil. The interval 85–132 (NGGAGTRKPSHASSVAKKDTLSSAAKSVKRSSTLEKSHNSWDASEESR) is disordered. The segment covering 116–132 (STLEKSHNSWDASEESR) has biased composition (basic and acidic residues). 13 WD repeats span residues 199-237 (LKLE…LFNY), 241-288 (TQRH…VWDS), 296-336 (VIGL…VWDW), 343-378 (AEIK…FWTW), 385-424 (RKQG…IWSK), 442-480 (QISK…MWDH), 485-521 (EREI…LRGT), 524-563 (DGFQ…LWNS), 567-604 (SLEW…VLDA), 610-646 (VSIH…LYNV), 653-692 (YSRY…YWDI), 702-760 (RSEC…LFQY), and 767-806 (APSH…QWRL). Polar residues predominate over residues 815-829 (NDNIAESSSAVNSPV). Residues 815–927 (NDNIAESSSA…NQDDDDAPLS (113 aa)) form a disordered region. The span at 914–927 (AQDENQDDDDAPLS) shows a compositional bias: acidic residues.

Belongs to the WD repeat EMAP family. In terms of assembly, homotrimer; self-association is mediated by the N-terminal coiled coil.

It localises to the cytoplasm. Its subcellular location is the cytoskeleton. It is found in the spindle. The protein resides in the microtubule organizing center. The protein localises to the midbody. In terms of biological role, essential for the formation and stability of microtubules (MTs). Required for the organization of the mitotic spindle and for the proper attachment of kinetochores to MTs. Promotes the recruitment of NUDC to the mitotic spindle for mitotic progression. The protein is Echinoderm microtubule-associated protein-like 4 (eml4) of Xenopus laevis (African clawed frog).